A 101-amino-acid polypeptide reads, in one-letter code: Urease subunit beta (101 aa).

This sequence belongs to the urease beta subunit family. In terms of assembly, heterotrimer of UreA (gamma), UreB (beta) and UreC (alpha) subunits. Three heterotrimers associate to form the active enzyme.

The protein resides in the cytoplasm. The enzyme catalyses urea + 2 H2O + H(+) = hydrogencarbonate + 2 NH4(+). Its pathway is nitrogen metabolism; urea degradation; CO(2) and NH(3) from urea (urease route): step 1/1. The chain is Urease subunit beta from Paraburkholderia xenovorans (strain LB400).